The following is a 109-amino-acid chain: Small ribosomal subunit protein uS17 (109 aa).

This sequence belongs to the universal ribosomal protein uS17 family. In terms of assembly, part of the 30S ribosomal subunit.

Functionally, one of the primary rRNA binding proteins, it binds specifically to the 5'-end of 16S ribosomal RNA. The protein is Small ribosomal subunit protein uS17 of Methanococcus vannielii.